The chain runs to 21 residues: Ocellatin-3 (21 aa).

The residue at position 21 (Ile21) is an Isoleucine amide.

In terms of tissue distribution, expressed by the skin dorsal glands.

The protein resides in the secreted. Functionally, has hemolytic activity against human erythrocytes and antibacterial activity against the Gram-negative bacterium E.coli. The sequence is that of Ocellatin-3 from Leptodactylus ocellatus (Argus frog).